The chain runs to 256 residues: Triosephosphate isomerase (256 aa).

9 to 11 (NWK) lines the substrate pocket. The active-site Electrophile is the His-97. The active-site Proton acceptor is Glu-169. Residues Gly-175, Ser-214, and 235 to 236 (GG) contribute to the substrate site.

The protein belongs to the triosephosphate isomerase family. As to quaternary structure, homodimer.

Its subcellular location is the cytoplasm. The catalysed reaction is D-glyceraldehyde 3-phosphate = dihydroxyacetone phosphate. It participates in carbohydrate biosynthesis; gluconeogenesis. It functions in the pathway carbohydrate degradation; glycolysis; D-glyceraldehyde 3-phosphate from glycerone phosphate: step 1/1. Its function is as follows. Involved in the gluconeogenesis. Catalyzes stereospecifically the conversion of dihydroxyacetone phosphate (DHAP) to D-glyceraldehyde-3-phosphate (G3P). The polypeptide is Triosephosphate isomerase (Aliivibrio fischeri (strain ATCC 700601 / ES114) (Vibrio fischeri)).